Reading from the N-terminus, the 80-residue chain is MNKNPIYRSEEEAKDIACGNVAAELDENSQALDAINGAGWKQTIVCTIAQGTVGCLVSYGLGNGGYCCTYTVECSKTCNK.

A propeptide spans 1–38 (MNKNPIYRSEEEAKDIACGNVAAELDENSQALDAINGA) (cleaved by FlvT). A 2,3-didehydrobutyrine; by FlvM1 mark is found at Thr43 and Thr47. Residues 52–55 (TVGC) constitute a cross-link (beta-methyllanthionine (Thr-Cys); by FlvM1). Positions 58–68 (SYGLGNGGYCC) form a cross-link, lanthionine (Ser-Cys); by FlvM1. Cross-links (beta-methyllanthionine (Thr-Cys); by FlvM1) lie at residues 69-74 (TYTVEC) and 71-78 (TVECSKTC).

The lanthionine formed by Ser-58 and Cys-68 forms a putative lipid II binding motif. Post-translationally, maturation of FlvA1 peptides involves the enzymatic conversion of Thr, and Ser into dehydrated AA and the formation of thioether bonds with cysteines. Modifications are processed by the flavecin synthetase FlvM1. This is followed by membrane translocation and cleavage of the modified precursor. In terms of processing, contains DL-lanthionine and DL-beta-methyllanthionine, when coepressed in E.coli with the flavecin synthetase FlvM1.

Its subcellular location is the secreted. In terms of biological role, lanthionine-containing peptide antibiotic (lantibiotic) only active on Gram-positive bacteria in synergy with Flvbeta peptides, which are encoded by the same operon than Flvalpha.a. Shows antibacterial activity in synergy with Flvbeta.b, Flvbeta.c, Flvbeta.e and Flvbeta.g. Does not show antibacterial activity when tested with Flvbeta.a, Flvbeta.d, Flvbeta.f and Flvbeta.h. The bactericidal activity of lantibiotics is based on depolarization of energized bacterial cytoplasmic membranes, initiated by the formation of aqueous transmembrane pores. In Ruminococcus flavefaciens, this protein is Lantibiotic Flvalpha.a.